We begin with the raw amino-acid sequence, 1025 residues long: Multidrug resistance protein MdtC (1025 aa).

12 helical membrane passes run 16-36 (LLTL…PVAP), 333-353 (EVEQ…FVFL), 360-380 (LIPA…MYLC), 387-407 (LSLM…IVVL), 431-451 (VGFT…PLLM), 459-479 (FFAE…FVSV), 528-548 (WVLL…ISIP), 853-873 (LWLM…LYES), 875-895 (VHPL…LLAL), 897-917 (LFDT…IGIV), 953-973 (PILM…LTSG), and 984-1004 (ITIA…TPVV).

This sequence belongs to the resistance-nodulation-cell division (RND) (TC 2.A.6) family. MdtC subfamily. Part of a tripartite efflux system composed of MdtA, MdtB and MdtC. MdtC forms a heteromultimer with MdtB.

Its subcellular location is the cell inner membrane. This is Multidrug resistance protein MdtC from Pantoea ananatis (strain AJ13355).